Here is a 180-residue protein sequence, read N- to C-terminus: FMN reductase (NADH) RutF (180 aa).

Belongs to the non-flavoprotein flavin reductase family. RutF subfamily.

The enzyme catalyses FMNH2 + NAD(+) = FMN + NADH + 2 H(+). Functionally, catalyzes the reduction of FMN to FMNH2 which is used to reduce pyrimidine by RutA via the Rut pathway. This Variovorax paradoxus (strain S110) protein is FMN reductase (NADH) RutF.